The sequence spans 197 residues: Fucoxanthin-chlorophyll a-c binding protein F, chloroplastic (197 aa).

The N-terminal 31 residues, 1–31 (MKFAVFASLLASAAAFAPAQQSARTSVATNM), are a transit peptide targeting the chloroplast. 3 consecutive transmembrane segments (helical) span residues 73 to 94 (ISMLAVVGYLVQENGIRLPGDI), 114 to 134 (ISTAGIAQIVAFIGFLEIAVM), and 174 to 196 (GRAAQMGILALMVHEKLGVSLIP).

It belongs to the fucoxanthin chlorophyll protein family. As to quaternary structure, the LHC complex of chromophytic algae is composed of fucoxanthin, chlorophyll A and C bound non-covalently by fucoxanthin chlorophyll proteins (FCPs). The ratio of the pigments in lhc; fucoxanthin: chlorophyll C: chlorophyll A is (0.6-1): (0.1-0.3): (1).

It is found in the plastid. It localises to the chloroplast thylakoid membrane. In terms of biological role, the light-harvesting complex (LHC) functions as a light receptor, it captures and delivers excitation energy to photosystems with which it is closely associated. In chromophytic algae, LHC is associated with photosystem II, energy being transferred from fucoxanthin and chlorophyll C to chlorophyll A and the photosynthetic reaction centers where it is used to synthesize ATP and reducing power. The protein is Fucoxanthin-chlorophyll a-c binding protein F, chloroplastic (FCPF) of Phaeodactylum tricornutum (Diatom).